Here is a 418-residue protein sequence, read N- to C-terminus: Serine hydroxymethyltransferase (418 aa).

(6S)-5,6,7,8-tetrahydrofolate contacts are provided by residues Leu120 and 124–126 (GHL). Lys229 is modified (N6-(pyridoxal phosphate)lysine).

It belongs to the SHMT family. Homodimer. The cofactor is pyridoxal 5'-phosphate.

It is found in the cytoplasm. It catalyses the reaction (6R)-5,10-methylene-5,6,7,8-tetrahydrofolate + glycine + H2O = (6S)-5,6,7,8-tetrahydrofolate + L-serine. Its pathway is one-carbon metabolism; tetrahydrofolate interconversion. The protein operates within amino-acid biosynthesis; glycine biosynthesis; glycine from L-serine: step 1/1. Functionally, catalyzes the reversible interconversion of serine and glycine with tetrahydrofolate (THF) serving as the one-carbon carrier. This reaction serves as the major source of one-carbon groups required for the biosynthesis of purines, thymidylate, methionine, and other important biomolecules. Also exhibits THF-independent aldolase activity toward beta-hydroxyamino acids, producing glycine and aldehydes, via a retro-aldol mechanism. The protein is Serine hydroxymethyltransferase of Myxococcus xanthus (strain DK1622).